We begin with the raw amino-acid sequence, 35 residues long: Apolipophorin-3 (35 aa).

In terms of assembly, equilibrium between a soluble monomer and a bound lipoprotein form. Apolipophorin-3 associates with lipophorin during lipid loading until each particle contains 9 or 14 molecules of apolipophorin-3. Hemolymph.

The protein localises to the secreted. Its function is as follows. Assists in the loading of diacylglycerol, generated from triacylglycerol stores in the fat body through the action of adipokinetic hormone, into lipophorin, the hemolymph lipoprotein. It increases the lipid carrying capacity of lipophorin by covering the expanding hydrophobic surface resulting from diacylglycerol uptake. It thus plays a critical role in the transport of lipids during flight in several species of insects. Has hemagglutinating activity towards rabbit erythrocytes. This is Apolipophorin-3 from Heliothis virescens (Tobacco budworm moth).